A 190-amino-acid chain; its full sequence is R46 site-specific recombinase (190 aa).

A Resolvase/invertase-type recombinase catalytic domain is found at 2 to 137 (RLFGYARVST…EGRQEAKLKG (136 aa)). Residue Ser10 is the O-(5'-phospho-DNA)-serine intermediate of the active site. Residues 161-180 (ATDIARRLSIARSTVYKILE) constitute a DNA-binding region (H-T-H motif).

It belongs to the site-specific recombinase resolvase family.

Functionally, site-specific recombination protein. This chain is R46 site-specific recombinase (tnpR), found in Escherichia coli.